Consider the following 902-residue polypeptide: Chitin synthase 3 (902 aa).

Residues 1–15 (MAYNRLDDDYFDNRR) show a composition bias toward basic and acidic residues. A disordered region spans residues 1 to 68 (MAYNRLDDDY…MGPGRHTPSD (68 aa)). Residues 19-30 (NRPPPHRTPSPG) are compositionally biased toward pro residues. A glycan (N-linked (GlcNAc...) asparagine) is linked at Asn80. The interval 104 to 161 (HHDAYYNPTYTPTPNEAQTPYGEPGYEHDGRPLLPQQDSYGQYSDNPQQQQQQQGGLK) is disordered. Polar residues-rich tracts occupy residues 111–121 (PTYTPTPNEAQ) and 139–150 (QQDSYGQYSDNP). 9 helical membrane passes run 449–469 (SAFG…YIAL), 547–567 (RWLN…YQFF), 577–597 (IAFF…WFAI), 623–643 (ILGV…FVLA), 656–676 (LAMI…AVFI), 699–719 (VVVT…VASL), 731–751 (LVQY…YAFC), 830–850 (VVVL…LSTA), and 874–894 (VVLY…MWFL).

This sequence belongs to the chitin synthase family. Class II subfamily.

It is found in the cell membrane. The enzyme catalyses [(1-&gt;4)-N-acetyl-beta-D-glucosaminyl](n) + UDP-N-acetyl-alpha-D-glucosamine = [(1-&gt;4)-N-acetyl-beta-D-glucosaminyl](n+1) + UDP + H(+). In terms of biological role, polymerizes chitin, a structural polymer of the cell wall and septum, by transferring the sugar moiety of UDP-GlcNAc to the non-reducing end of the growing chitin polymer. CHS1 and CHS3 have compensatory functions in cell wall modifications in responses to stresses. Might function as a negative regulator on expression of other CHS genes. The protein is Chitin synthase 3 of Pyricularia oryzae (strain 70-15 / ATCC MYA-4617 / FGSC 8958) (Rice blast fungus).